Consider the following 635-residue polypeptide: Threonine--tRNA ligase (635 aa).

Residues Met1–Thr61 enclose the TGS domain. A catalytic region spans residues Asp242 to Pro533. Positions 333, 384, and 510 each coordinate Zn(2+).

It belongs to the class-II aminoacyl-tRNA synthetase family. Homodimer. Zn(2+) serves as cofactor.

It localises to the cytoplasm. It carries out the reaction tRNA(Thr) + L-threonine + ATP = L-threonyl-tRNA(Thr) + AMP + diphosphate + H(+). Catalyzes the attachment of threonine to tRNA(Thr) in a two-step reaction: L-threonine is first activated by ATP to form Thr-AMP and then transferred to the acceptor end of tRNA(Thr). Also edits incorrectly charged L-seryl-tRNA(Thr). The sequence is that of Threonine--tRNA ligase from Paraburkholderia xenovorans (strain LB400).